Here is a 188-residue protein sequence, read N- to C-terminus: dCTP deaminase (188 aa).

DCTP is bound by residues 111–116, 135–137, Gln156, Tyr170, and Gln180; these read KSTYAR and TLE. Glu137 functions as the Proton donor/acceptor in the catalytic mechanism.

This sequence belongs to the dCTP deaminase family. As to quaternary structure, homotrimer.

It catalyses the reaction dCTP + H2O + H(+) = dUTP + NH4(+). Its pathway is pyrimidine metabolism; dUMP biosynthesis; dUMP from dCTP (dUTP route): step 1/2. Catalyzes the deamination of dCTP to dUTP. In Francisella philomiragia subsp. philomiragia (strain ATCC 25017 / CCUG 19701 / FSC 153 / O#319-036), this protein is dCTP deaminase.